We begin with the raw amino-acid sequence, 309 residues long: Movement protein (309 aa).

Residues His245–Ala273 are disordered. Residues Leu246–Ala262 are compositionally biased toward polar residues.

It is found in the host cell junction. Its subcellular location is the host plasmodesma. Its function is as follows. Transports viral genome to neighboring plant cells directly through plasmosdesmata, without any budding. The movement protein allows efficient cell to cell propagation, by bypassing the host cell wall barrier. Acts by forming a tubular structure at the host plasmodesmata, enlarging it enough to allow free passage of virion capsids. This Solanum lycopersicum (Tomato) protein is Movement protein.